The chain runs to 239 residues: Small ribosomal subunit protein uS2 (239 aa).

It belongs to the universal ribosomal protein uS2 family.

In Prochlorococcus marinus (strain MIT 9303), this protein is Small ribosomal subunit protein uS2.